The following is an 880-amino-acid chain: Guanine nucleotide-binding protein subunit beta 2 (880 aa).

Ser-24 is subject to Phosphoserine. Kelch repeat units follow at residues 291-339 (NIYI…MVNN), 377-425 (HIFF…KIDI), and 501-552 (TVII…LTPS). The tract at residues 624-649 (FNSGSAAQESPKAGASASSASAASFD) is disordered. A compositionally biased stretch (low complexity) spans 638–647 (ASASSASAAS). Residues 691-738 (TVVLHGGSNGLNVLDDMWLMDLECETWTPIETFAKADSSEDGDEKLDS) form a Kelch 4 repeat.

G proteins are composed of 3 units, alpha, beta and gamma. GPB1 interacts with the alpha subunit GPA2.

Its subcellular location is the cytoplasm. The protein localises to the mitochondrion. Functionally, beta subunit of a guanine nucleotide-binding protein (G protein). G proteins are involved as modulators or transducers in various transmembrane signaling systems. The beta and gamma chains are required for the GTPase activity, for replacement of GDP by GTP, and for G protein-effector interaction. Involved in the determination of the cAMP level according to nutritional conditions, most probably as a regulator of cAMP phosphodiesterase. Required for the control of pseudohyphal and haploid invasive growth. The polypeptide is Guanine nucleotide-binding protein subunit beta 2 (GPB2) (Saccharomyces cerevisiae (strain ATCC 204508 / S288c) (Baker's yeast)).